The following is a 311-amino-acid chain: Ribosomal protein L11 methyltransferase (311 aa).

4 residues coordinate S-adenosyl-L-methionine: T162, G183, D205, and N248.

Belongs to the methyltransferase superfamily. PrmA family.

The protein resides in the cytoplasm. The catalysed reaction is L-lysyl-[protein] + 3 S-adenosyl-L-methionine = N(6),N(6),N(6)-trimethyl-L-lysyl-[protein] + 3 S-adenosyl-L-homocysteine + 3 H(+). Its function is as follows. Methylates ribosomal protein L11. The sequence is that of Ribosomal protein L11 methyltransferase from Bacillus licheniformis (strain ATCC 14580 / DSM 13 / JCM 2505 / CCUG 7422 / NBRC 12200 / NCIMB 9375 / NCTC 10341 / NRRL NRS-1264 / Gibson 46).